A 478-amino-acid polypeptide reads, in one-letter code: Probable glycine dehydrogenase (decarboxylating) subunit 2 (478 aa).

K264 carries the N6-(pyridoxal phosphate)lysine modification.

It belongs to the GcvP family. C-terminal subunit subfamily. In terms of assembly, the glycine cleavage system is composed of four proteins: P, T, L and H. In this organism, the P 'protein' is a heterodimer of two subunits. Requires pyridoxal 5'-phosphate as cofactor.

It carries out the reaction N(6)-[(R)-lipoyl]-L-lysyl-[glycine-cleavage complex H protein] + glycine + H(+) = N(6)-[(R)-S(8)-aminomethyldihydrolipoyl]-L-lysyl-[glycine-cleavage complex H protein] + CO2. Functionally, the glycine cleavage system catalyzes the degradation of glycine. The P protein binds the alpha-amino group of glycine through its pyridoxal phosphate cofactor; CO(2) is released and the remaining methylamine moiety is then transferred to the lipoamide cofactor of the H protein. This Endomicrobium trichonymphae protein is Probable glycine dehydrogenase (decarboxylating) subunit 2.